Consider the following 119-residue polypeptide: MARVKRGVTAHAKHKKVYKAAKGFRGRRKNTIRAAKAAVDKAGQYAFRDRKRKKRTFRALWIQRINAAVRPLGMTYSVFINGLAKSGVIVDRKVLSDLAIHEPVAFQAIAEKAKAALAA.

This sequence belongs to the bacterial ribosomal protein bL20 family.

Binds directly to 23S ribosomal RNA and is necessary for the in vitro assembly process of the 50S ribosomal subunit. It is not involved in the protein synthesizing functions of that subunit. The protein is Large ribosomal subunit protein bL20 of Rhodopseudomonas palustris (strain BisA53).